The sequence spans 3744 residues: SAGA complex/NuA4 acetyltransferase complex subunit TRA1 (3744 aa).

Ser2 is modified (N-acetylserine). 4 HEAT repeats span residues 2–40 (SLTEQIEQFASRFRDDDATLQSRYSTLSELYDIMELLNS), 46–92 (FFLQ…NQTF), 94–131 (PYAMEVLEFLLSVLPKENEENGILCMKVLTTLFKSFKS), and 135–172 (DKLDSFIRIIIQIYKNTPNLINQTFYEAGKAEQGDLDS). The tract at residues 2-2598 (SLTEQIEQFA…KPYHTRQISS (2597 aa)) is HEAT. Ser172 bears the Phosphoserine mark. Residues 185 to 195 (FSKNDEEKDFP) show a composition bias toward basic and acidic residues. Residues 185–212 (FSKNDEEKDFPSKQSSTEPRFENSTSSN) are disordered. Over residues 196–212 (SKQSSTEPRFENSTSSN) the composition is skewed to polar residues. HEAT repeat units lie at residues 247–284 (PEFTPLIMNLLNIQIKQQQEAREQAESRGEHFTSISTE), 319–357 (QDYVNFVPDLIIRLLQDCPSELSSARKELLHATRHILST), and 437–477 (KLLL…RFKT). A compositionally biased stretch (basic and acidic residues) spans 522–539 (LEPSDDDHLMPQPKKEDI). The interval 522–546 (LEPSDDDHLMPQPKKEDINDSPDVE) is disordered. Residue Ser542 is modified to Phosphoserine. HEAT repeat units follow at residues 588-628 (RTLM…VFSY), 734-771 (PNFAGILLRFLKGKLKDLGNVDFNTSNVLIRLFKLSFM), 779-821 (INEV…SIGG), 829-867 (RSIKPILQVLLQSLNQMILTARLPHERELYVELCITVPV), 870-910 (SVLA…NLTA), 919-958 (PVIDDVSKALFNLLQPQPFNHAISHNVVRILGKLGGRNRQ), 1074-1112 (NQENLFLRLLESVFYATSIKELKDDAMDLLNNLLDHFCL), 1188-1225 (SFIPELAKQFIHLCYDETYYNKRGGVLGIKVLIDNVKS), 1283-1320 (KVLENTLTDIVCELSNANPKVRNACQKSLHTISNLTGI), 1369-1408 (TFNEELFRLLQESIVLADAEDESLSTNIQKTTEYSTSEQL), 1435-1472 (NIRIRILAVFFKTMLKTSPEIINTTYEALKGSLAENSK), 1476-1512 (ELLQNGLKPLLMNLSDHQKLTVPGLDALSKLLELLIA), 1693-1734 (LKLK…RFTE), 1739-1776 (DQNPLLLDFIDFSFSNGIKASYSLKKFIFHNIIASSNK), 1918-1955 (FPIKVVTQVFVALLRSSHVEARYLVKQSLDVLTPVLHE), 2115-2155 (ELGL…LDSE), 2182-2219 (ENLPTIQNLLEKCIKSDHHDVQEALQKVLQVIMKAIKA), 2230-2267 (SPGKTFIQMLTSVITQDLQETSSVTAGVTLAWVLFMNF), 2269-2307 (DNIVPLLTPLMKTFSKLCKDHLSISQPKDAMALEEARIT), and 2536-2573 (IISSDFIDSLIEIFYQDPKAIHRAWVTLFPQVYKSIPK). Residues 2599 to 3744 (RTNVINMLLD…RTDVNFMPWF (1146 aa)) are head. Residues 2622-3177 (LVKYLAISYN…HFQLRTTKED (556 aa)) form the FAT domain. A PI3K/PI4K catalytic domain is found at 3374-3732 (FLPTVDFVRG…CIGSAVSPRN (359 aa)). Positions 3380–3386 (FVRGTHS) are G-loop. The catalytic loop stretch occupies residues 3563–3571 (MINNRTPHK). The tract at residues 3600-3625 (LKNHDLSLPPDSPIFHNNEPVPFRLT) is activation loop. The 33-residue stretch at 3712-3744 (TPTVTTQFILDCIGSAVSPRNLARTDVNFMPWF) folds into the FATC domain.

This sequence belongs to the PI3/PI4-kinase family. TRA1 subfamily. As to quaternary structure, component of the 1.8 MDa SAGA (Spt-Ada-Gcn5 acetyltransferase) complex, which is composed of 19 subunits TRA1, SPT7, TAF5, NGG1/ADA3, SGF73, SPT20/ADA5, SPT8, TAF12, TAF6, HFI1/ADA1, UBP8, GCN5, ADA2, SPT3, SGF29, TAF10, TAF9, SGF11 and SUS1. The SAGA complex is composed of 4 modules, namely the HAT (histone acetyltransferase) module (GCN5, ADA2, NGG1/ADA3 and SGF29), the DUB (deubiquitinating) module (UBP8, SGF11, SGF73 and SUS1), the core or TAF (TBP-associated factor) module (TAF5, TAF6, TAF9, TAF10 and TAF12), and the Tra1 or SPT (Suppressor of Ty) module (TRA1, HFI1/ADA1, SPT3, SPT7, SPT8 and SPT20/ADA5). The Tra1/SPT module binds activators, the core module recruits TBP (TATA-binding protein), the HAT module contains the histone H3 acetyltransferase GCN5, and the DUB module comprises the histone H2B deubiquitinase UBP8. Also identified in an altered form of SAGA, named SALSA (SAGA altered, Spt8 absent) or SLIK (SAGA-like) complex, which contains a C-terminal truncated form of SPT7 and is missing SPT8. However, it has been shown that the SAGA and SAGA-like SALSA/SLIK transcriptional coactivators are structurally and biochemically equivalent. Component of the NuA4 acetyltransferase complex, which consists of the catalytic subunit ESA1 and the 12 non-catalytic subunits ACT1, ARP4, EAF1/VID21, SWC4/EAF2, EAF3, EAF5, EAF6, EAF7, EPL1, TRA1, YAF9 and YNG2. TRA1 is the scaffold subunit for binding to a variety of transcription activators or transcription factors to recruit NuA4 for targeted gene activation. Identified in the Ada.spt complex with NGG1/ADA3 and SPT7.

It localises to the nucleus. Functionally, essential scaffold subunit of the transcription coactivator SAGA complex. SAGA acts as a general cofactor required for essentially all RNA polymerase II transcription. At the promoters, SAGA is required for transcription pre-initiation complex (PIC) recruitment. It influences RNA polymerase II transcriptional activity through different activities such as TBP interaction (via core/TAF module) and promoter selectivity, interaction with transcription activators (via Tra1/SPT module), and chromatin modification through histone acetylation (via HAT module) and deubiquitination (via DUB module). SAGA preferentially acetylates histones H3 (to form H3K9ac, H3K14ac, H3K18ac and H3K23ac) and H2B and deubiquitinates histone H2B. SAGA interacts with DNA via upstream activating sequences (UASs). Also identified in a modified version of SAGA named SALSA or SLIK. The cleavage of SPT7 and the absence of the SPT8 subunit in SLIK neither drive any major conformational differences in its structure compared with SAGA, nor significantly affect HAT, DUB, or DNA-binding activities. Component of the NuA4 histone H4/H2A acetyltransferase involved in transcription and DNA repair. The polypeptide is SAGA complex/NuA4 acetyltransferase complex subunit TRA1 (Saccharomyces cerevisiae (strain ATCC 204508 / S288c) (Baker's yeast)).